Consider the following 236-residue polypeptide: Biosynthetic peptidoglycan transglycosylase (236 aa).

The helical transmembrane segment at 12-31 threads the bilayer; sequence ALLWFVAGSIVLVLVFRWVP.

Belongs to the glycosyltransferase 51 family.

The protein localises to the cell inner membrane. The enzyme catalyses [GlcNAc-(1-&gt;4)-Mur2Ac(oyl-L-Ala-gamma-D-Glu-L-Lys-D-Ala-D-Ala)](n)-di-trans,octa-cis-undecaprenyl diphosphate + beta-D-GlcNAc-(1-&gt;4)-Mur2Ac(oyl-L-Ala-gamma-D-Glu-L-Lys-D-Ala-D-Ala)-di-trans,octa-cis-undecaprenyl diphosphate = [GlcNAc-(1-&gt;4)-Mur2Ac(oyl-L-Ala-gamma-D-Glu-L-Lys-D-Ala-D-Ala)](n+1)-di-trans,octa-cis-undecaprenyl diphosphate + di-trans,octa-cis-undecaprenyl diphosphate + H(+). It participates in cell wall biogenesis; peptidoglycan biosynthesis. Peptidoglycan polymerase that catalyzes glycan chain elongation from lipid-linked precursors. The protein is Biosynthetic peptidoglycan transglycosylase of Pseudomonas putida (strain ATCC 47054 / DSM 6125 / CFBP 8728 / NCIMB 11950 / KT2440).